A 493-amino-acid chain; its full sequence is NAD(P)H-quinone oxidoreductase chain 4, chloroplastic (493 aa).

The next 14 helical transmembrane spans lie at 4-24 (FPWL…IPLL), 34-54 (WYTL…FGYY), 87-107 (MGLI…AWPI), 111-131 (PKLF…LFTS), 134-154 (LFLF…LISL), 167-187 (FIFY…TVCF), 212-232 (ILYL…PFHT), 242-262 (HYST…YGWI), 276-296 (FAPW…SVCL), 313-333 (MGFV…GAIC), 334-354 (QMIS…TTYD), 385-405 (SLAL…LGII), 417-437 (FIIL…LSML), and 462-482 (VFII…PNIL).

This sequence belongs to the complex I subunit 4 family.

It localises to the plastid. The protein resides in the chloroplast thylakoid membrane. The enzyme catalyses a plastoquinone + NADH + (n+1) H(+)(in) = a plastoquinol + NAD(+) + n H(+)(out). The catalysed reaction is a plastoquinone + NADPH + (n+1) H(+)(in) = a plastoquinol + NADP(+) + n H(+)(out). This chain is NAD(P)H-quinone oxidoreductase chain 4, chloroplastic, found in Chara vulgaris (Common stonewort).